A 428-amino-acid polypeptide reads, in one-letter code: D-amino acid dehydrogenase (428 aa).

3–17 contributes to the FAD binding site; the sequence is VVILGSGVVGVASAY.

It belongs to the DadA oxidoreductase family. The cofactor is FAD.

The enzyme catalyses a D-alpha-amino acid + A + H2O = a 2-oxocarboxylate + AH2 + NH4(+). Its pathway is amino-acid degradation; D-alanine degradation; NH(3) and pyruvate from D-alanine: step 1/1. Functionally, oxidative deamination of D-amino acids. This is D-amino acid dehydrogenase from Burkholderia lata (strain ATCC 17760 / DSM 23089 / LMG 22485 / NCIMB 9086 / R18194 / 383).